The sequence spans 622 residues: Chaperone protein HscA homolog (622 aa).

The protein belongs to the heat shock protein 70 family.

Functionally, chaperone involved in the maturation of iron-sulfur cluster-containing proteins. Has a low intrinsic ATPase activity which is markedly stimulated by HscB. The polypeptide is Chaperone protein HscA homolog (Burkholderia mallei (strain NCTC 10247)).